The sequence spans 365 residues: uncharacterized protein (365 aa).

The next 6 membrane-spanning stretches (helical) occupy residues 3 to 23, 60 to 80, 100 to 120, 141 to 161, 171 to 191, and 280 to 300; these read MDTS…LYSI, IGII…LNII, VFLF…LIAI, SGIL…GDEF, AIAS…IPLL, and TALF…LALF.

The protein to S.solfataricus C04034.

The protein resides in the cell membrane. This is an uncharacterized protein from Methanocaldococcus jannaschii (strain ATCC 43067 / DSM 2661 / JAL-1 / JCM 10045 / NBRC 100440) (Methanococcus jannaschii).